We begin with the raw amino-acid sequence, 311 residues long: Dihydroorotate dehydrogenase A (fumarate) (311 aa).

FMN contacts are provided by residues Ser-19 and 43–44 (KS). Substrate-binding positions include Lys-43, 67 to 71 (NSMGL), and Asn-127. Asn-127 contributes to the FMN binding site. Cys-130 (nucleophile) is an active-site residue. Residues Lys-164 and Val-192 each contribute to the FMN site. 193–194 (NS) is a binding site for substrate. FMN-binding positions include Gly-221, 249-250 (GG), and 271-272 (GT).

The protein belongs to the dihydroorotate dehydrogenase family. Type 1 subfamily. In terms of assembly, homodimer. Requires FMN as cofactor.

The protein resides in the cytoplasm. It catalyses the reaction (S)-dihydroorotate + fumarate = orotate + succinate. The protein operates within pyrimidine metabolism; UMP biosynthesis via de novo pathway. Catalyzes the conversion of dihydroorotate to orotate with fumarate as the electron acceptor. The chain is Dihydroorotate dehydrogenase A (fumarate) (pyrDA) from Lactococcus lactis subsp. lactis (strain IL1403) (Streptococcus lactis).